A 104-amino-acid chain; its full sequence is Large ribosomal subunit protein uL24 (104 aa).

It belongs to the universal ribosomal protein uL24 family. Part of the 50S ribosomal subunit.

Its function is as follows. One of two assembly initiator proteins, it binds directly to the 5'-end of the 23S rRNA, where it nucleates assembly of the 50S subunit. One of the proteins that surrounds the polypeptide exit tunnel on the outside of the subunit. The polypeptide is Large ribosomal subunit protein uL24 (Bradyrhizobium diazoefficiens (strain JCM 10833 / BCRC 13528 / IAM 13628 / NBRC 14792 / USDA 110)).